The sequence spans 135 residues: uncharacterized protein (135 aa).

This is an uncharacterized protein from Archaeoglobus fulgidus (strain ATCC 49558 / DSM 4304 / JCM 9628 / NBRC 100126 / VC-16).